We begin with the raw amino-acid sequence, 80 residues long: Toxin Acra I-2 (80 aa).

The first 22 residues, 1-22 (MMKLALFSIIVILFSLIGSIHG), serve as a signal peptide directing secretion. The region spanning 25 to 80 (VPGNYPLDSSGNKYPCTVLGDNQSCIDVCKKHGVKYGYCYSFKCWCEFLEDKNVSI) is the LCN-type CS-alpha/beta domain. 3 cysteine pairs are disulfide-bonded: C40–C63, C49–C68, and C53–C70.

As to expression, expressed by the venom gland.

The protein resides in the secreted. Probable neurotoxin that inhibits ion channels. Is toxic to mice. Is about 2.8% of the total protein in the venom. In Androctonus crassicauda (Arabian fat-tailed scorpion), this protein is Toxin Acra I-2.